The chain runs to 225 residues: 7-cyano-7-deazaguanine synthase (225 aa).

10–20 (LSGGIDSATAA) is an ATP binding site. Zn(2+)-binding residues include Cys191, Cys199, Cys202, and Cys205.

Belongs to the QueC family. Zn(2+) is required as a cofactor.

It carries out the reaction 7-carboxy-7-deazaguanine + NH4(+) + ATP = 7-cyano-7-deazaguanine + ADP + phosphate + H2O + H(+). It functions in the pathway purine metabolism; 7-cyano-7-deazaguanine biosynthesis. Functionally, catalyzes the ATP-dependent conversion of 7-carboxy-7-deazaguanine (CDG) to 7-cyano-7-deazaguanine (preQ(0)). This chain is 7-cyano-7-deazaguanine synthase, found in Prochlorococcus marinus (strain NATL1A).